The primary structure comprises 129 residues: Large ribosomal subunit protein bL19c (129 aa).

This sequence belongs to the bacterial ribosomal protein bL19 family.

Its subcellular location is the plastid. This Prototheca wickerhamii protein is Large ribosomal subunit protein bL19c.